Here is a 397-residue protein sequence, read N- to C-terminus: 3-hydroxy-3-methylglutaryl-coenzyme A reductase (397 aa).

Catalysis depends on charge relay system residues Glu-96 and Asp-301. His-391 functions as the Proton donor in the catalytic mechanism.

It belongs to the HMG-CoA reductase family.

It catalyses the reaction (R)-mevalonate + 2 NADP(+) + CoA = (3S)-3-hydroxy-3-methylglutaryl-CoA + 2 NADPH + 2 H(+). It participates in metabolic intermediate biosynthesis; (R)-mevalonate biosynthesis; (R)-mevalonate from acetyl-CoA: step 3/3. Functionally, converts HMG-CoA to mevalonate. This is 3-hydroxy-3-methylglutaryl-coenzyme A reductase (hmgA) from Methanothermobacter thermautotrophicus (strain ATCC 29096 / DSM 1053 / JCM 10044 / NBRC 100330 / Delta H) (Methanobacterium thermoautotrophicum).